We begin with the raw amino-acid sequence, 562 residues long: Solute carrier family 22 member 6 (562 aa).

At 1–15 (MPFSELLEQVGSTGR) the chain is on the cytoplasmic side. A helical transmembrane segment spans residues 16 to 36 (FQVLHVTLLCIPVLMMASHNL). Over 37 to 147 (LQNFVATVPS…LVCDMHSFKQ (111 aa)) the chain is Extracellular. A helical membrane pass occupies residues 148–168 (MGQTIYMGGVLVGALLFGGLS). At 169 to 174 (DRYGRR) the chain is on the cytoplasmic side. Residues 175 to 195 (ILLLISNLLMAVSGTCAAFSS) traverse the membrane as a helical segment. Residues 196 to 205 (SFSLFCVFRF) are Extracellular-facing. Residues 206 to 226 (GCGLALSGLGLNTFSLIVEWI) traverse the membrane as a helical segment. At 227-235 (PTRIRTAVG) the chain is on the cytoplasmic side. Residues 236 to 256 (TTTGYCYTLGQLILVLLAYFI) form a helical membrane-spanning segment. Topologically, residues 257–260 (RDWR) are extracellular. Residues 261-281 (WLTLAVSLPFYVFFLIAWWFH) traverse the membrane as a helical segment. Residues 282–351 (ESSRWLALSN…FNTPAMRKRT (70 aa)) lie on the Cytoplasmic side of the membrane. A helical transmembrane segment spans residues 352-372 (LCLSAVWLSTSFAYYGLAMDL). The Extracellular segment spans residues 373–378 (DKFGVD). The chain crosses the membrane as a helical span at residues 379 to 399 (IYLIQVIFGAVDIPAKVVVVV). Topologically, residues 400 to 408 (SMSLIGRRR) are cytoplasmic. Residues 409–429 (SQCAVLVVAGITILLNLLVPY) form a helical membrane-spanning segment. Residues 430-444 (DKQTIRTCLAVLGKG) lie on the Extracellular side of the membrane. The chain crosses the membrane as a helical span at residues 445-465 (CLAASFNCCYLYSGELFPTII). Topologically, residues 466–468 (RQN) are cytoplasmic. The chain crosses the membrane as a helical span at residues 469 to 489 (GMGWVSMMARIGAMVAPMVLL). The Extracellular portion of the chain corresponds to 490–495 (TRDYIP). A helical membrane pass occupies residues 496–516 (WLPGLIYGGAPILSGLAAIFL). The Cytoplasmic portion of the chain corresponds to 517–562 (PETLGYPLPDTIQDVEESGSGRKSKMSTKETITLQDKQANLLKQSA).

Belongs to the major facilitator (TC 2.A.1) superfamily. Organic cation transporter (TC 2.A.1.19) family. In terms of processing, glycosylated. Glycosylation is necessary for proper targeting of the transporter to the plasma membrane.

The protein resides in the cell membrane. The protein localises to the basolateral cell membrane. It localises to the basal cell membrane. Its function is as follows. Involved in the renal elimination of endogenous and exogenous organic anions. Functions as organic anion exchanger when the uptake of one molecule of organic anion is coupled with an efflux of one molecule of endogenous dicarboxylic acid (glutarate, ketoglutarate, etc). Mediates the sodium-independent uptake of p-aminohippurate (PAH), 2,3-dimercapto-1-propanesulfonic acid (DMPS), cidofovir, adefovir, 9-(2-phosphonylmethoxyethyl) guanine (PMEG), 9-(2-phosphonylmethoxyethyl) diaminopurine (PMEDAP), ochratoxin (OTA), acyclovir (ACV), 3'-azido-3-'deoxythymidine (AZT), cimetidine (CMD), 2,4-dichloro-phenoxyacetate (2,4-D), hippurate (HA), indoleacetate (IA), indoxyl sulfate (IS), 3-carboxy-4-methyl-5-propyl-2-furanpropionate (CMPF) and edaravone sulfate. Mediates the sodium-independent uptake of p-aminohippurate (PAH). PAH uptake is inhibited by p-chloromercuribenzenesulphonate (PCMBS), diethyl pyrocarbonate (DEPC), indomethacin, sulindac, diclofenac, carprofen, okadaic acid, benzothiazolylcysteine (BTC), S-chlorotrifluoroethylcysteine (CTFC), cysteine S-conjugates S-dichlorovinylcysteine (DCVC), furosemide, steviol, phorbol 12-myristate 13-acetate (PMA), calcium ionophore A23187, benzylpenicillin, bumetamide, losartan, probenecid, phenol red, urate, glutarate and alpha-ketoglutarate. PAH uptake is inhibited by glutarate. The polypeptide is Solute carrier family 22 member 6 (SLC22A6) (Pseudopleuronectes americanus (Winter flounder)).